The following is a 75-amino-acid chain: Small ribosomal subunit protein bS18 (75 aa).

The protein belongs to the bacterial ribosomal protein bS18 family. As to quaternary structure, part of the 30S ribosomal subunit. Forms a tight heterodimer with protein bS6.

Binds as a heterodimer with protein bS6 to the central domain of the 16S rRNA, where it helps stabilize the platform of the 30S subunit. The protein is Small ribosomal subunit protein bS18 of Cellvibrio japonicus (strain Ueda107) (Pseudomonas fluorescens subsp. cellulosa).